The sequence spans 1354 residues: Eukaryotic translation initiation factor 3 subunit A (1354 aa).

Lysine 68 is subject to N6-acetyllysine. Residues 82 to 120 are a coiled coil; the sequence is NIKSLEDVVRAYLKLAEEKTEAAKEESQQMVLDIEDLDN. In terms of domain architecture, PCI spans 315–498; that stretch reads MQRMSTRVLL…RTLSFGSDLN (184 aa). Serine 492 and serine 584 each carry phosphoserine. An interaction with EIF3B region spans residues 664 to 835; the sequence is LDPDFIMAKQ…REERERAERA (172 aa). 3 disordered regions span residues 809–844, 866–1249, and 1262–1354; these read EKEE…LREY, EERE…RDRD, and DLRD…TVRR. Composition is skewed to basic and acidic residues over residues 866 to 1136, 1148 to 1249, 1262 to 1302, and 1310 to 1343; these read EERE…DDAR, GWRE…RDRD, DLRD…DPPR, and SRER…TKNE. Residue serine 895 is modified to Phosphoserine. The 1; truncated repeat unit spans residues 924 to 931; the sequence is DDERPHRR. The interval 924 to 1143 is 22 X 10 AA approximate tandem repeats of [DA]-[DE]-[ED]-R-[PLIGFSV]-[RPS]-[RW]-[RL]-[GNIHT]-[DGLPTAM]; it reads DDERPHRRDE…DARPGPWRPF (220 aa). Copy 2 of the repeat occupies 932–941; the sequence is DEDRLRRLGG. Residues 942–951 form a 3; approximate repeat; the sequence is DDEERESSLR. Serine 949 carries the phosphoserine modification. 18 consecutive repeat copies span residues 953–962, 963–972, 973–982, 983–992, 993–1002, 1003–1012, 1013–1022, 1023–1032, 1033–1042, 1043–1052, 1053–1062, 1064–1073, 1074–1083, 1084–1093, 1094–1103, 1104–1113, 1114–1123, and 1124–1133. Position 1038 is a phosphoserine (serine 1038). The 22; approximate repeat unit spans residues 1134 to 1143; that stretch reads DARPGPWRPF. Serine 1159 and serine 1233 each carry phosphoserine. 2 positions are modified to phosphoserine: serine 1310 and serine 1336.

Belongs to the eIF-3 subunit A family. In terms of assembly, component of the eukaryotic translation initiation factor 3 (eIF-3) complex, which is composed of 13 subunits: EIF3A, EIF3B, EIF3C, EIF3D, EIF3E, EIF3F, EIF3G, EIF3H, EIF3I, EIF3J, EIF3K, EIF3L and EIF3M. The eIF-3 complex appears to include 3 stable modules: module A is composed of EIF3A, EIF3B, EIF3G and EIF3I; module B is composed of EIF3F, EIF3H, and EIF3M; and module C is composed of EIF3C, EIF3D, EIF3E, EIF3L and EIF3K. EIF3C of module C binds EIF3B of module A and EIF3H of module B, thereby linking the three modules. EIF3J is a labile subunit that binds to the eIF-3 complex via EIF3B. The eIF-3 complex interacts with RPS6KB1 under conditions of nutrient depletion. Mitogenic stimulation leads to binding and activation of a complex composed of MTOR and RPTOR, leading to phosphorylation and release of RPS6KB1 and binding of EIF4B to eIF-3. Interacts with EIF4G1. Also interacts with KRT7 and PIWIL2. Phosphorylated. Phosphorylation is enhanced upon serum stimulation.

Its subcellular location is the cytoplasm. In terms of biological role, RNA-binding component of the eukaryotic translation initiation factor 3 (eIF-3) complex, which is required for several steps in the initiation of protein synthesis. The eIF-3 complex associates with the 40S ribosome and facilitates the recruitment of eIF-1, eIF-1A, eIF-2:GTP:methionyl-tRNAi and eIF-5 to form the 43S pre-initiation complex (43S PIC). The eIF-3 complex stimulates mRNA recruitment to the 43S PIC and scanning of the mRNA for AUG recognition. The eIF-3 complex is also required for disassembly and recycling of post-termination ribosomal complexes and subsequently prevents premature joining of the 40S and 60S ribosomal subunits prior to initiation. The eIF-3 complex specifically targets and initiates translation of a subset of mRNAs involved in cell proliferation, including cell cycling, differentiation and apoptosis, and uses different modes of RNA stem-loop binding to exert either translational activation or repression. The chain is Eukaryotic translation initiation factor 3 subunit A (Eif3a) from Rattus norvegicus (Rat).